The sequence spans 82 residues: U17-hexatoxin-Hi1a (82 aa).

An N-terminal signal peptide occupies residues 1–21 (MKTIFAVTLLLFAIYVPECMP). 5 disulfide bridges follow: cysteine 22-cysteine 33, cysteine 27-cysteine 48, cysteine 32-cysteine 61, cysteine 58-cysteine 69, and cysteine 63-cysteine 75.

In terms of tissue distribution, expressed by the venom gland.

It localises to the secreted. Functionally, probable ion channel inhibitor. The polypeptide is U17-hexatoxin-Hi1a (Hadronyche infensa (Fraser island funnel-web spider)).